Reading from the N-terminus, the 261-residue chain is Zinc finger protein 664 (261 aa).

9 C2H2-type zinc fingers span residues 3–25, 31–53, 59–81, 87–109, 115–137, 143–165, 171–193, 199–221, and 227–249; these read YKCPMCREFFSERADLFMHQKVH, HKCDKCDKGFFHISELHIHWRDH, YKCDDCGKDFSTTTKLNRHKKIH, YKCYECGKAFNWSPHLQIHMRVH, YVCSECGRGFSNSSNLCMHQRVH, FKCEECGKAFRHTSSLCMHQRVH, YKCYECGKAFSQSSSLCIHQRVH, YRCCGCGKAFSQSSSLCIHQRVH, and FKCDECGKAFSQSTSLCIHQRVH. Residue lysine 257 forms a Glycyl lysine isopeptide (Lys-Gly) (interchain with G-Cter in SUMO2) linkage.

The protein belongs to the krueppel C2H2-type zinc-finger protein family. In terms of tissue distribution, expressed in the organ of Corti, stria vascularis, auditory nerve and retina. Lower levels in the tongue, cerebellum, small intestine and kidney.

The protein localises to the nucleus. Its function is as follows. May be involved in transcriptional regulation. In Cavia porcellus (Guinea pig), this protein is Zinc finger protein 664 (ZNF664).